A 704-amino-acid polypeptide reads, in one-letter code: Boron transporter 1 (704 aa).

The Cytoplasmic portion of the chain corresponds to 1–35 (MEETFVPFEGIKNDLKGRLMCYKQDWTGGFKAGFR). Residues 36–56 (ILAPTTYIFFASAIPVISFGE) traverse the membrane as a helical segment. The Extracellular segment spans residues 57–75 (QLERSTDGVLTAVQTLAST). A helical membrane pass occupies residues 76-96 (AICGMIHSIIGGQPLLILGVA). The Cytoplasmic segment spans residues 97 to 120 (EPTVIMYTFMFNFAKARPELGRDL). A helical membrane pass occupies residues 121 to 141 (FLAWSGWVCVWTALMLFVLAI). At 142–155 (CGACSIINRFTRVA) the chain is on the extracellular side. Residues 156–176 (GELFGLLIAMLFMQQAIKGLV) form a helical membrane-spanning segment. The Cytoplasmic portion of the chain corresponds to 177 to 195 (DEFRIPERENQKLKEFLPS). The helical transmembrane segment at 196–216 (WRFANGMFALVLSFGLLLTGL) threads the bilayer. Residues 217–233 (RSRKARSWRYGTGWLRS) lie on the Extracellular side of the membrane. The chain crosses the membrane as a helical span at residues 234–254 (LIADYGVPLMVLVWTGVSYIP). The Cytoplasmic segment spans residues 255–289 (AGDVPKGIPRRLFSPNPWSPGAYGNWTVVKEMLDV). Residues 290-310 (PIVYIIGAFIPASMIAVLYYF) form a helical membrane-spanning segment. At 311 to 337 (DHSVASQLAQQKEFNLRKPSSYHYDLL) the chain is on the extracellular side. The chain crosses the membrane as a helical span at residues 338 to 358 (LLGFLTLMCGLLGVPPSNGVI). Residues 359 to 480 (PQSPMHTKSL…STMVGGCVAA (122 aa)) lie on the Cytoplasmic side of the membrane. A helical transmembrane segment spans residues 481–501 (MPILKMIPTSVLWGYFAFMAI). Over 502-557 (ESLPGNQFWERILLLFTAPSRRFKVLEDYHATFVETVPFKTIAMFTLFQTTYLLIC) the chain is Extracellular. Residues 558–578 (FGLTWIPIAGVMFPLMIMFLI) form a helical membrane-spanning segment. Over 579–704 (PVRQYLLPRF…RSPLNQSSSN (126 aa)) the chain is Cytoplasmic. The interval 641–704 (EFRHTSSPKV…RSPLNQSSSN (64 aa)) is disordered. Residues 647–664 (SPKVTSSSSTPVNNRSLS) show a composition bias toward low complexity.

It belongs to the anion exchanger (TC 2.A.31.3) family. As to expression, expressed in proximal side of various root cells, notably in the columella, lateral root cap, epidermis and endodermis in tip and elongation zones of the root. Also detected in the epidermis, cortex, endodermis, and stele cells of the root hair zone. Observed in cotyledons and hypocotyls.

It is found in the cell membrane. It localises to the endosome membrane. The protein resides in the vacuole membrane. Efflux-type boron (B) transporter for xylem loading, responsive of boron translocation from roots to shoots under boron limitation. Boron is essential for maintaining the integrity of plants cell walls. This Arabidopsis thaliana (Mouse-ear cress) protein is Boron transporter 1.